Reading from the N-terminus, the 216-residue chain is Uracil phosphoribosyltransferase (216 aa).

Residue 30–34 coordinates GTP; it reads KNLVR. 5-phospho-alpha-D-ribose 1-diphosphate contacts are provided by residues Arg-80, Arg-105, and 140–148; that span reads DPMIATAST. Residues Ile-203 and 208–210 contribute to the uracil site; that span reads GDA. Asp-209 contacts 5-phospho-alpha-D-ribose 1-diphosphate.

This sequence belongs to the UPRTase family. Requires Mg(2+) as cofactor.

The catalysed reaction is UMP + diphosphate = 5-phospho-alpha-D-ribose 1-diphosphate + uracil. It participates in pyrimidine metabolism; UMP biosynthesis via salvage pathway; UMP from uracil: step 1/1. With respect to regulation, allosterically activated by GTP. Catalyzes the conversion of uracil and 5-phospho-alpha-D-ribose 1-diphosphate (PRPP) to UMP and diphosphate. The polypeptide is Uracil phosphoribosyltransferase (Saccharolobus islandicus (strain Y.N.15.51 / Yellowstone #2) (Sulfolobus islandicus)).